Reading from the N-terminus, the 39-residue chain is Omega-actinopoditoxin-Mb1a (39 aa).

3 disulfide bridges follow: Cys4/Cys19, Cys11/Cys30, and Cys18/Cys38.

Post-translationally, contains 3 disulfide bonds. Expressed by the venom gland.

Its subcellular location is the secreted. Its function is as follows. Potent inhibitor of insect, but not mammalian, voltage-gated calcium channels (Cav). This is Omega-actinopoditoxin-Mb1a from Missulena bradleyi (Eastern mouse spider).